We begin with the raw amino-acid sequence, 124 residues long: Ribonuclease pancreatic (124 aa).

A disordered region spans residues 1–24; sequence KETAAAKFQRQHMDSSTSSASSSN. Residues Lys-7 and Arg-10 each contribute to the substrate site. His-12 serves as the catalytic Proton acceptor. Intrachain disulfides connect Cys-26–Cys-84, Cys-40–Cys-95, Cys-58–Cys-110, and Cys-65–Cys-72. A glycan (N-linked (GlcNAc...) asparagine; in river-breed only) is linked at Asn-34. Substrate contacts are provided by residues 41 to 45, Lys-66, and Arg-85; that span reads KPVNT. His-119 acts as the Proton donor in catalysis.

This sequence belongs to the pancreatic ribonuclease family. In terms of assembly, monomer. Interacts with and forms tight 1:1 complexes with RNH1. Dimerization of two such complexes may occur. Interaction with RNH1 inhibits this protein. In terms of processing, swamp breed ribonuclease do not bind carbohydrate, but there is evidence of a polymorphic form that does. In terms of tissue distribution, pancreas.

The protein resides in the secreted. The catalysed reaction is an [RNA] containing cytidine + H2O = an [RNA]-3'-cytidine-3'-phosphate + a 5'-hydroxy-ribonucleotide-3'-[RNA].. The enzyme catalyses an [RNA] containing uridine + H2O = an [RNA]-3'-uridine-3'-phosphate + a 5'-hydroxy-ribonucleotide-3'-[RNA].. In terms of biological role, endonuclease that catalyzes the cleavage of RNA on the 3' side of pyrimidine nucleotides. Acts on single-stranded and double-stranded RNA. In Bubalus bubalis (Domestic water buffalo), this protein is Ribonuclease pancreatic (RNASE1).